A 509-amino-acid polypeptide reads, in one-letter code: Protein disulfide-isomerase (509 aa).

The first 19 residues, 1–19 (MLSRSLLCLALAWVARVGA), serve as a signal peptide directing secretion. The region spanning 20 to 136 (DAPEEEDNVL…IVNWLKKRTG (117 aa)) is the Thioredoxin 1 domain. Catalysis depends on nucleophile residues Cys-55 and Cys-58. Cys-55 and Cys-58 are disulfide-bonded. Lys-202 is subject to N6-acetyllysine. An N6-succinyllysine mark is found at Lys-224 and Lys-273. A phosphoserine mark is found at Ser-333 and Ser-359. One can recognise a Thioredoxin 2 domain in the interval 335 to 477 (ELTAEKITEF…FKKFLESGGQ (143 aa)). Catalysis depends on nucleophile residues Cys-399 and Cys-402. Cys-399 and Cys-402 are joined by a disulfide. Phosphoserine is present on Ser-429. The disordered stretch occupies residues 473–509 (ESGGQDGAGDDDDVDLEEALEPDMEEDDDQKAVKDEL). The span at 480 to 501 (AGDDDDVDLEEALEPDMEEDDD) shows a compositional bias: acidic residues. The Prevents secretion from ER motif lies at 506-509 (KDEL).

Belongs to the protein disulfide isomerase family. As to quaternary structure, heterodimer; heterodimerizes with the protein microsomal triglyceride transfer MTTP. Homodimer. Homodimer. Monomers and homotetramers may also occur. Interacts with P4HA2, forming a heterotetramer consisting of 2 alpha subunits (P4HA2) and 2 beta (P4HB), where P4HB plays the role of a structural subunit; this tetramer catalyzes the formation of 4-hydroxyproline in collagen. Also constitutes the structural subunit of the microsomal triacylglycerol transfer protein MTTP in mammalian cells. Stabilizes both enzymes and retain them in the ER without contributing to the catalytic activity. Binds UBQLN1. Interacts with ERO1B. Interacts with ILDR2. Interacts with ERN1/IRE1A (via N-terminus); the interaction is enhanced by phosphorylation of P4HB by FAM20C in response to endoplasmic reticulum stress and results in attenuation of ERN1 activity. Post-translationally, phosphorylation of Ser-359 by FAM20C is induced by endoplasmic reticulum stress and results in a functional switch from oxidoreductase to molecular chaperone. It also promotes interaction with ERN1.

Its subcellular location is the endoplasmic reticulum. It is found in the endoplasmic reticulum lumen. It localises to the melanosome. The protein resides in the cell membrane. The catalysed reaction is Catalyzes the rearrangement of -S-S- bonds in proteins.. Its function is as follows. This multifunctional protein catalyzes the formation, breakage and rearrangement of disulfide bonds. At the cell surface, seems to act as a reductase that cleaves disulfide bonds of proteins attached to the cell. May therefore cause structural modifications of exofacial proteins. Inside the cell, seems to form/rearrange disulfide bonds of nascent proteins. At high concentrations and following phosphorylation by FAM20C, functions as a chaperone that inhibits aggregation of misfolded proteins. At low concentrations, facilitates aggregation (anti-chaperone activity). May be involved with other chaperones in the structural modification of the TG precursor in hormone biogenesis. Also acts as a structural subunit of various enzymes such as prolyl 4-hydroxylase and microsomal triacylglycerol transfer protein MTTP. Receptor for LGALS9; the interaction retains P4HB at the cell surface of Th2 T helper cells, increasing disulfide reductase activity at the plasma membrane, altering the plasma membrane redox state and enhancing cell migration. This is Protein disulfide-isomerase (P4HB) from Cricetulus griseus (Chinese hamster).